We begin with the raw amino-acid sequence, 173 residues long: Peptide deformylase (173 aa).

Positions 98 and 140 each coordinate Fe cation. Residue glutamate 141 is part of the active site. Position 144 (histidine 144) interacts with Fe cation.

This sequence belongs to the polypeptide deformylase family. It depends on Fe(2+) as a cofactor.

It catalyses the reaction N-terminal N-formyl-L-methionyl-[peptide] + H2O = N-terminal L-methionyl-[peptide] + formate. Its function is as follows. Removes the formyl group from the N-terminal Met of newly synthesized proteins. Requires at least a dipeptide for an efficient rate of reaction. N-terminal L-methionine is a prerequisite for activity but the enzyme has broad specificity at other positions. The protein is Peptide deformylase of Caulobacter vibrioides (strain ATCC 19089 / CIP 103742 / CB 15) (Caulobacter crescentus).